Consider the following 436-residue polypeptide: tRNA (guanine(37)-N(1))-methyltransferase 1 (436 aa).

Residues His229, 277–278 (DL), and Asn325 each bind S-adenosyl-L-methionine.

This sequence belongs to the class I-like SAM-binding methyltransferase superfamily. TRM5/TYW2 family. Monomer.

It localises to the mitochondrion matrix. It is found in the nucleus. The protein localises to the cytoplasm. It catalyses the reaction guanosine(37) in tRNA + S-adenosyl-L-methionine = N(1)-methylguanosine(37) in tRNA + S-adenosyl-L-homocysteine + H(+). Functionally, specifically methylates the N1 position of guanosine-37 in various cytoplasmic and mitochondrial tRNAs. Methylation is not dependent on the nature of the nucleoside 5' of the target nucleoside. This is the first step in the biosynthesis of wybutosine (yW), a modified base adjacent to the anticodon of tRNAs and required for accurate decoding. This is tRNA (guanine(37)-N(1))-methyltransferase 1 from Phaeodactylum tricornutum (strain CCAP 1055/1).